The sequence spans 23 residues: Phallacidin proprotein (23 aa).

A propeptide is located at residue proline 1. Residues 2 to 8 constitute a cross-link (cyclopeptide (Ala-Pro)); sequence AWLVDCP. Positions 3–7 form a cross-link, 2'-cysteinyl-6'-hydroxytryptophan sulfoxide (Trp-Cys); the sequence is WLVDC. The propeptide occupies 9 to 23; it reads CVGDDVNFILTRGQK.

The protein belongs to the MSDIN fungal toxin family. Processed by the macrocyclase-peptidase enzyme POPB to yield a toxic cyclic heptapeptide. POPB first removes 10 residues from the N-terminus. Conformational trapping of the remaining peptide forces the enzyme to release this intermediate rather than proceed to macrocyclization. The enzyme rebinds the remaining peptide in a different conformation and catalyzes macrocyclization of the N-terminal 7 residues.

In terms of biological role, major toxin that belongs to the bicyclic heptapeptides called phallotoxins. Although structurally related to amatoxins, phallotoxins have a different mode of action, which is the stabilization of F-actin. Phallotoxins are poisonous when administered parenterally, but not orally because of poor absorption. This Amanita fuligineoides protein is Phallacidin proprotein.